The chain runs to 588 residues: MKLPVREFDAVVIGAGGAGMRAALQISQSGQTCALLSKVFPTRSHTVSAQGGITVALGNTHEDNWEWHMYDTVKGSDYIGDQDAIEYMCKTGPEAILELEHMGLPFSRLDDGRIYQRPFGGQSKNFGGEQAARTAAAADRTGHALLHTLYQQNLKNHTTIFSEWYALDLVKNQDGAVVGCTALCIETGEVVYFKARATVLATGGAGRIYQSTTNAHINTGDGVGMALRAGVPVQDMEMWQFHPTGIAGAGVLVTEGCRGEGGYLLNKHGERFMERYAPNAKDLAGRDVVARSIMIEIREGRGCDGPWGPHAKLKLDHLGKEVLESRLPGILELSRTFAHVDPVKEPIPVIPTCHYMMGGIPTKVTGQALTVNEQGEDVVIPGLFAVGEIACVSVHGANRLGGNSLLDLVVFGRAAGLHLQESIAEQGVLRDASESDVEGSLERLNRWNNNRNGEDPVAIRKALQECMQHNFSVFREGDAMAKGLEQLKVIRERLKNARLDDTSSEFNTQRVECLELDNLMETAYATAVSANFRTESRGAHSRFDFPERDDANWLCHTLYQPQTESMTRRSVNMEPKLRPAFPPKIRTY.

FAD-binding positions include Gly14–Gly19, Ser37–Gly52, and Asp221. Tele-8alpha-FAD histidine is present on His45. His242 and Thr254 together coordinate substrate. Residue Arg286 is the Proton acceptor of the active site. His354 contacts substrate. An FAD-binding site is contributed by Glu388. A substrate-binding site is contributed by Arg399. Ser404 to Leu405 is an FAD binding site.

It belongs to the FAD-dependent oxidoreductase 2 family. FRD/SDH subfamily. Part of an enzyme complex containing four subunits: a flavoprotein, an iron-sulfur, cytochrome b-556, and a hydrophobic anchor protein. The cofactor is FAD.

It localises to the cell inner membrane. The catalysed reaction is a quinone + succinate = fumarate + a quinol. It functions in the pathway carbohydrate metabolism; tricarboxylic acid cycle; fumarate from succinate (bacterial route): step 1/1. Its function is as follows. Two distinct, membrane-bound, FAD-containing enzymes are responsible for the catalysis of fumarate and succinate interconversion; the fumarate reductase is used in anaerobic growth, and the succinate dehydrogenase is used in aerobic growth. This Salmonella typhimurium (strain LT2 / SGSC1412 / ATCC 700720) protein is Succinate dehydrogenase flavoprotein subunit (sdhA).